Consider the following 376-residue polypeptide: UDP-N-acetylglucosamine--N-acetylmuramyl-(pentapeptide) pyrophosphoryl-undecaprenol N-acetylglucosamine transferase (376 aa).

Residues 11 to 13 (TGG), Asn-117, Arg-160, Ser-208, and Gln-310 each bind UDP-N-acetyl-alpha-D-glucosamine.

It belongs to the glycosyltransferase 28 family. MurG subfamily.

The protein localises to the cell inner membrane. It carries out the reaction di-trans,octa-cis-undecaprenyl diphospho-N-acetyl-alpha-D-muramoyl-L-alanyl-D-glutamyl-meso-2,6-diaminopimeloyl-D-alanyl-D-alanine + UDP-N-acetyl-alpha-D-glucosamine = di-trans,octa-cis-undecaprenyl diphospho-[N-acetyl-alpha-D-glucosaminyl-(1-&gt;4)]-N-acetyl-alpha-D-muramoyl-L-alanyl-D-glutamyl-meso-2,6-diaminopimeloyl-D-alanyl-D-alanine + UDP + H(+). It participates in cell wall biogenesis; peptidoglycan biosynthesis. In terms of biological role, cell wall formation. Catalyzes the transfer of a GlcNAc subunit on undecaprenyl-pyrophosphoryl-MurNAc-pentapeptide (lipid intermediate I) to form undecaprenyl-pyrophosphoryl-MurNAc-(pentapeptide)GlcNAc (lipid intermediate II). This is UDP-N-acetylglucosamine--N-acetylmuramyl-(pentapeptide) pyrophosphoryl-undecaprenol N-acetylglucosamine transferase from Rickettsia massiliae (strain Mtu5).